The primary structure comprises 399 residues: Elongation factor Tu (399 aa).

The tr-type G domain maps to 10–204 (KDHVNIGTIG…AVDDYIDTPE (195 aa)). The tract at residues 19-26 (GHVDHGKT) is G1. Residue 19 to 26 (GHVDHGKT) coordinates GTP. Threonine 26 is a binding site for Mg(2+). The G2 stretch occupies residues 60–64 (GITIN). The tract at residues 81–84 (DCPG) is G3. Residues 81–85 (DCPGH) and 136–139 (NKKD) contribute to the GTP site. A G4 region spans residues 136-139 (NKKD). The segment at 174-176 (SAL) is G5.

The protein belongs to the TRAFAC class translation factor GTPase superfamily. Classic translation factor GTPase family. EF-Tu/EF-1A subfamily. As to quaternary structure, monomer.

The protein resides in the cytoplasm. The catalysed reaction is GTP + H2O = GDP + phosphate + H(+). Its function is as follows. GTP hydrolase that promotes the GTP-dependent binding of aminoacyl-tRNA to the A-site of ribosomes during protein biosynthesis. The protein is Elongation factor Tu of Synechocystis sp. (strain ATCC 27184 / PCC 6803 / Kazusa).